The sequence spans 302 residues: Proline dehydrogenase 1 (302 aa).

Residue lysine 95 coordinates substrate. Aspartate 129 is an active-site residue. The FAD site is built by methionine 130 and glutamine 158. The active site involves arginine 179. FAD is bound by residues 182 to 184 and 221 to 222; these read KGA and TH. 283–284 serves as a coordination point for substrate; sequence RR.

This sequence belongs to the proline oxidase family. FAD is required as a cofactor.

It catalyses the reaction L-proline + a quinone = (S)-1-pyrroline-5-carboxylate + a quinol + H(+). The protein operates within amino-acid degradation; L-proline degradation into L-glutamate; L-glutamate from L-proline: step 1/2. Its function is as follows. Converts proline to delta-1-pyrroline-5-carboxylate. This chain is Proline dehydrogenase 1 (fadM), found in Bacillus subtilis subsp. natto.